Reading from the N-terminus, the 153-residue chain is Pheromone-binding protein Gp-9 (153 aa).

An N-terminal signal peptide occupies residues 1 to 19 (MKTFVLHIFIFALVAFASA). 3 disulfides stabilise this stretch: C37/C77, C73/C129, and C118/C138.

It belongs to the PBP/GOBP family. In terms of assembly, homodimer.

It is found in the secreted. In terms of biological role, colony queen number, a major feature of social organization, is associated with worker genotype for Gp-9. Colonies are headed by either a single reproductive queen (monogyne form) or multiple queens (polygyne form). Differences in worker Gp-9 genotypes between social forms may cause differences in workers' abilities to recognize queens and regulate their numbers. This Solenopsis saevissima (Fire ant) protein is Pheromone-binding protein Gp-9.